The chain runs to 133 residues: Small ribosomal subunit protein uS8 (133 aa).

Belongs to the universal ribosomal protein uS8 family. In terms of assembly, part of the 30S ribosomal subunit.

One of the primary rRNA binding proteins, it binds directly to 16S rRNA central domain where it helps coordinate assembly of the platform of the 30S subunit. The sequence is that of Small ribosomal subunit protein uS8 from Staphylothermus marinus (strain ATCC 43588 / DSM 3639 / JCM 9404 / F1).